We begin with the raw amino-acid sequence, 269 residues long: Tryptophan synthase alpha chain (269 aa).

Active-site proton acceptor residues include E45 and D56.

Belongs to the TrpA family. As to quaternary structure, tetramer of two alpha and two beta chains.

The enzyme catalyses (1S,2R)-1-C-(indol-3-yl)glycerol 3-phosphate + L-serine = D-glyceraldehyde 3-phosphate + L-tryptophan + H2O. It functions in the pathway amino-acid biosynthesis; L-tryptophan biosynthesis; L-tryptophan from chorismate: step 5/5. The alpha subunit is responsible for the aldol cleavage of indoleglycerol phosphate to indole and glyceraldehyde 3-phosphate. In Shouchella clausii (strain KSM-K16) (Alkalihalobacillus clausii), this protein is Tryptophan synthase alpha chain.